A 91-amino-acid chain; its full sequence is Probable Fe(2+)-trafficking protein (91 aa).

The protein belongs to the Fe(2+)-trafficking protein family.

Could be a mediator in iron transactions between iron acquisition and iron-requiring processes, such as synthesis and/or repair of Fe-S clusters in biosynthetic enzymes. This chain is Probable Fe(2+)-trafficking protein, found in Paraburkholderia phytofirmans (strain DSM 17436 / LMG 22146 / PsJN) (Burkholderia phytofirmans).